Consider the following 3106-residue polypeptide: Probable polyketide synthase 29 (3106 aa).

Polar residues predominate over residues 1 to 11 (MVQNTDNTRNS). The tract at residues 1-20 (MVQNTDNTRNSKLIRDRNDY) is disordered. A Ketosynthase family 3 (KS3) domain is found at 28–461 (SGDIAVIGIG…GSNVCLILSE (434 aa)). Active-site for beta-ketoacyl synthase activity residues include Cys200, His339, and His384. The interval 661-694 (GVSADIIIGHSLGEVSSPYCSGMIDFQTLCYLTY) is acyl/malonyl transferase. The For acyl/malonyl transferase activity role is filled by Ser671. The segment at 961–1082 (PSIHGLGNNT…GNFSLTKHNS (122 aa)) is N-terminal hotdog fold. A PKS/mFAS DH domain is found at 961-1266 (PSIHGLGNNT…CALVSLDSNP (306 aa)). His994 (proton acceptor; for dehydratase activity) is an active-site residue. The segment at 1099–1266 (NFTSISKQDF…CALVSLDSNP (168 aa)) is C-terminal hotdog fold. Asp1171 serves as the catalytic Proton donor; for dehydratase activity. The Carrier domain maps to 2533 to 2610 (NNNEIIRSTI…QSIEIILSAH (78 aa)). Ser2570 bears the O-(pantetheine 4'-phosphoryl)serine mark. A coiled-coil region spans residues 2609-2656 (AHNNNNKNNNNNNNINNNNKNNNNNNNKNNNNINNNINNNKNNNNNNN). Residues 2614–2656 (NKNNNNNNNINNNNKNNNNNNNKNNNNINNNINNNKNNNNNNN) form a disordered region.

The cofactor is pantetheine 4'-phosphate.

Probable polyketide synthase. The sequence is that of Probable polyketide synthase 29 (pks29) from Dictyostelium discoideum (Social amoeba).